Consider the following 543-residue polypeptide: Chaperonin GroEL (543 aa).

Residues 29 to 32, 86 to 90, Gly-413, 477 to 479, and Asp-493 contribute to the ATP site; these read TLGP, DGTTT, and DAL. A disordered region spans residues 524 to 543; sequence EKDKPEMPGGAPGMGMGGMY. Gly residues predominate over residues 533-543; the sequence is GAPGMGMGGMY.

It belongs to the chaperonin (HSP60) family. Forms a cylinder of 14 subunits composed of two heptameric rings stacked back-to-back. Interacts with the co-chaperonin GroES.

Its subcellular location is the cytoplasm. The catalysed reaction is ATP + H2O + a folded polypeptide = ADP + phosphate + an unfolded polypeptide.. Its function is as follows. Together with its co-chaperonin GroES, plays an essential role in assisting protein folding. The GroEL-GroES system forms a nano-cage that allows encapsulation of the non-native substrate proteins and provides a physical environment optimized to promote and accelerate protein folding. In Clostridium acetobutylicum (strain ATCC 824 / DSM 792 / JCM 1419 / IAM 19013 / LMG 5710 / NBRC 13948 / NRRL B-527 / VKM B-1787 / 2291 / W), this protein is Chaperonin GroEL.